Here is a 331-residue protein sequence, read N- to C-terminus: UDP-galactose/UDP-glucose transporter 3 (331 aa).

8 consecutive transmembrane segments (helical) span residues 11 to 31, 49 to 69, 80 to 100, 112 to 132, 135 to 155, 170 to 190, 206 to 226, and 245 to 265; these read VLLL…QGIL, HLAF…YIMI, APWW…AMGI, VLAK…VYGI, TLPE…FALL, APLG…TNAT, IMLG…FGLP, and WDIL…FLTI. A Di-lysine motif motif is present at residues 327-331; that stretch reads KKKKA.

The protein belongs to the nucleotide-sugar transporter family. UDP-galactose:UMP antiporter (TC 2.A.7.11) subfamily. Mostly expressed in flowers, and, to a lower extent, in roots, stems and leaves.

It localises to the endoplasmic reticulum membrane. The protein localises to the golgi apparatus membrane. Functionally, essential sugar transporter required for the transport of UDP-glucose from the cytoplasm into the Golgi and the endoplasmic reticulum. Essential for pollen development and involved in embryo sac progress. This chain is UDP-galactose/UDP-glucose transporter 3, found in Arabidopsis thaliana (Mouse-ear cress).